The following is an 820-amino-acid chain: Serine/threonine-protein phosphatase 4 regulatory subunit 3-A (820 aa).

Residues Met1–Val100 enclose the WH1 domain. The segment covering Glu682–Glu694 has biased composition (acidic residues). Disordered regions lie at residues Glu682 to Gly712 and Ala750 to Ser820. The span at Glu701–Gly712 shows a compositional bias: basic and acidic residues. 2 stretches are compositionally biased toward polar residues: residues Ala750–Ser761 and Pro768–Gly790. Residues Tyr798–Asp809 show a composition bias toward acidic residues.

Belongs to the SMEK family. Serine/threonine-protein phosphatase 4 (PP4) occurs in different assemblies of the catalytic and one or more regulatory subunits.

Its function is as follows. Regulatory subunit of serine/threonine-protein phosphatase 4 (PP4). This Xenopus laevis (African clawed frog) protein is Serine/threonine-protein phosphatase 4 regulatory subunit 3-A.